The primary structure comprises 296 residues: GTPase Era (296 aa).

Residues 7–174 enclose the Era-type G domain; it reads KCSMSAIVGA…VDYLCETSPY (168 aa). A G1 region spans residues 15 to 22; that stretch reads GATNAGKS. 15 to 22 is a GTP binding site; that stretch reads GATNAGKS. The segment at 41-45 is G2; that stretch reads QTTRV. Positions 62–65 are G3; that stretch reads DTPG. GTP contacts are provided by residues 62 to 66 and 124 to 127; these read DTPGI and NKID. The tract at residues 124–127 is G4; it reads NKID. The interval 153–155 is G5; sequence ISA. Residues 205–282 form the KH type-2 domain; it reads LRHELPYSLS…HLFLFVKVRE (78 aa).

It belongs to the TRAFAC class TrmE-Era-EngA-EngB-Septin-like GTPase superfamily. Era GTPase family. As to quaternary structure, monomer.

It is found in the cytoplasm. The protein resides in the cell inner membrane. Its function is as follows. An essential GTPase that binds both GDP and GTP, with rapid nucleotide exchange. Plays a role in 16S rRNA processing and 30S ribosomal subunit biogenesis and possibly also in cell cycle regulation and energy metabolism. This Ehrlichia ruminantium (strain Welgevonden) protein is GTPase Era.